The following is a 306-amino-acid chain: Glutaminase (306 aa).

Substrate contacts are provided by Ser-61, Asn-111, Glu-157, Asn-164, Tyr-188, Tyr-240, and Val-258.

This sequence belongs to the glutaminase family. As to quaternary structure, homotetramer.

It carries out the reaction L-glutamine + H2O = L-glutamate + NH4(+). This is Glutaminase from Psychrobacter cryohalolentis (strain ATCC BAA-1226 / DSM 17306 / VKM B-2378 / K5).